Here is a 426-residue protein sequence, read N- to C-terminus: Isovaleryl-CoA dehydrogenase, mitochondrial (426 aa).

Residues 1-32 (MATAAWLLGRRVASWRMRPPLQSLAGLITQRT) constitute a mitochondrion transit peptide. 2 positions are modified to N6-acetyllysine; alternate: lysine 58 and lysine 78. Lysine 58 and lysine 78 each carry N6-succinyllysine; alternate. FAD is bound by residues 165-174 (LAMSEPNAGS) and 198-200 (WIT). Residue serine 174 coordinates substrate. A substrate-binding site is contributed by 222 to 223 (SR). Lysine 241 bears the N6-acetyllysine mark. Residues tyrosine 277 and 284-287 (DLER) contribute to the substrate site. The active-site Proton acceptor is glutamate 286. An FAD-binding site is contributed by arginine 312. The residue at position 318 (lysine 318) is an N6-succinyllysine. FAD contacts are provided by residues glutamine 323 and 380 to 384 (QCLGG). A substrate-binding site is contributed by 407–408 (AG). 409–411 (TSE) provides a ligand contact to FAD.

Belongs to the acyl-CoA dehydrogenase family. In terms of assembly, homotetramer. Requires FAD as cofactor.

It is found in the mitochondrion matrix. It carries out the reaction 3-methylbutanoyl-CoA + oxidized [electron-transfer flavoprotein] + H(+) = 3-methylbut-2-enoyl-CoA + reduced [electron-transfer flavoprotein]. The catalysed reaction is pentanoyl-CoA + oxidized [electron-transfer flavoprotein] + H(+) = (2E)-pentenoyl-CoA + reduced [electron-transfer flavoprotein]. The enzyme catalyses hexanoyl-CoA + oxidized [electron-transfer flavoprotein] + H(+) = (2E)-hexenoyl-CoA + reduced [electron-transfer flavoprotein]. It catalyses the reaction butanoyl-CoA + oxidized [electron-transfer flavoprotein] + H(+) = (2E)-butenoyl-CoA + reduced [electron-transfer flavoprotein]. Its pathway is amino-acid degradation; L-leucine degradation; (S)-3-hydroxy-3-methylglutaryl-CoA from 3-isovaleryl-CoA: step 1/3. Its function is as follows. Catalyzes the conversion of isovaleryl-CoA/3-methylbutanoyl-CoA to 3-methylbut-2-enoyl-CoA as an intermediate step in the leucine (Leu) catabolic pathway. To a lesser extent, is also able to catalyze the oxidation of other saturated short-chain acyl-CoA thioesters as pentanoyl-CoA, hexenoyl-CoA and butenoyl-CoA. The chain is Isovaleryl-CoA dehydrogenase, mitochondrial (IVD) from Bos taurus (Bovine).